Here is a 508-residue protein sequence, read N- to C-terminus: Photosystem II CP47 reaction center protein (508 aa).

Transmembrane regions (helical) follow at residues 21-36 (SVHI…WAGS), 101-115 (IVFS…IWHW), 140-156 (GIHL…FGAF), 203-218 (IAAG…FHLS), 237-252 (VLSS…AFVV), and 457-472 (SFAL…HGAR).

This sequence belongs to the PsbB/PsbC family. PsbB subfamily. In terms of assembly, PSII is composed of 1 copy each of membrane proteins PsbA, PsbB, PsbC, PsbD, PsbE, PsbF, PsbH, PsbI, PsbJ, PsbK, PsbL, PsbM, PsbT, PsbX, PsbY, PsbZ, Psb30/Ycf12, at least 3 peripheral proteins of the oxygen-evolving complex and a large number of cofactors. It forms dimeric complexes. Requires Binds multiple chlorophylls. PSII binds additional chlorophylls, carotenoids and specific lipids. as cofactor.

It localises to the plastid. Its subcellular location is the chloroplast thylakoid membrane. In terms of biological role, one of the components of the core complex of photosystem II (PSII). It binds chlorophyll and helps catalyze the primary light-induced photochemical processes of PSII. PSII is a light-driven water:plastoquinone oxidoreductase, using light energy to abstract electrons from H(2)O, generating O(2) and a proton gradient subsequently used for ATP formation. The sequence is that of Photosystem II CP47 reaction center protein from Barbarea verna (Land cress).